The sequence spans 214 residues: Ras-like protein 2 (214 aa).

GTP-binding positions include 19–24 (GVGKSC), 35–41 (VDEYDPT), 65–66 (AG), 122–125 (NKCD), and 152–154 (SAK). The short motif at 38 to 46 (YDPTIEDSY) is the Effector region element. Residues 178 to 197 (QGYSTGSGGSNAGGPSNKME) are disordered. A Cysteine methyl ester modification is found at cysteine 211. Cysteine 211 carries the S-farnesyl cysteine lipid modification. A propeptide spans 212-214 (VLM) (removed in mature form).

The protein belongs to the small GTPase superfamily. Ras family. As to quaternary structure, interacts with farnesyltransferase beta subunit RAM1.

Its subcellular location is the cell membrane. Alternates between an inactive form bound to GDP and an active form bound to GTP. Activated by a guanine nucleotide-exchange factor (GEF) and inactivated by a GTPase-activating protein (GAP). In terms of biological role, modulates the activity of the adenylate cyclase catalytic subunit and therefore affects the biosynthesis of cyclic-AMP. Plays a role in both surface attachment and surface recognition of appressoria, a highly specialized infection structure for plant penetration. Regulates appressorium formation by coordinated regulation of cAMP signaling and Pmk1 MAPK pathways. The polypeptide is Ras-like protein 2 (Pyricularia oryzae (strain 70-15 / ATCC MYA-4617 / FGSC 8958) (Rice blast fungus)).